The chain runs to 376 residues: Putative phosphoserine aminotransferase (376 aa).

Residues 1–30 (MADQLTPSLDIPAALKPRDGRFGSGPSKVR) form a disordered region. Arg-50 provides a ligand contact to L-glutamate. Pyridoxal 5'-phosphate contacts are provided by residues 84 to 85 (AT), Phe-108, Thr-154, Asp-176, and Gln-199. Lys-200 carries the N6-(pyridoxal phosphate)lysine modification. 251–252 (NT) serves as a coordination point for pyridoxal 5'-phosphate.

This sequence belongs to the class-V pyridoxal-phosphate-dependent aminotransferase family. SerC subfamily. In terms of assembly, homodimer. It depends on pyridoxal 5'-phosphate as a cofactor.

Its subcellular location is the cytoplasm. The enzyme catalyses O-phospho-L-serine + 2-oxoglutarate = 3-phosphooxypyruvate + L-glutamate. The catalysed reaction is 4-(phosphooxy)-L-threonine + 2-oxoglutarate = (R)-3-hydroxy-2-oxo-4-phosphooxybutanoate + L-glutamate. Its pathway is amino-acid biosynthesis; L-serine biosynthesis; L-serine from 3-phospho-D-glycerate: step 2/3. It participates in cofactor biosynthesis; pyridoxine 5'-phosphate biosynthesis; pyridoxine 5'-phosphate from D-erythrose 4-phosphate: step 3/5. Its function is as follows. Catalyzes the reversible conversion of 3-phosphohydroxypyruvate to phosphoserine and of 3-hydroxy-2-oxo-4-phosphonooxybutanoate to phosphohydroxythreonine. This chain is Putative phosphoserine aminotransferase, found in Mycobacterium leprae (strain TN).